Reading from the N-terminus, the 176-residue chain is Neuroblastoma suppressor of tumorigenicity 1 (176 aa).

Residues 1–17 (MTVWLLIGFLLPVAIFA) form the signal peptide. Intrachain disulfides connect Cys34-Cys84, Cys48-Cys98, Cys58-Cys117, Cys62-Cys119, and Cys81-Cys122. A CTCK domain is found at 34–123 (CEAKNITQIV…ILQCSCQACG (90 aa)). Residues 148–176 (ETLGHHHHRPPAREEDSPAQSQREGESEE) are disordered.

It belongs to the DAN family. Interacts with bmp2; the interaction is blocked in presence of nog.

It localises to the secreted. Its function is as follows. May act as a tumor suppressor. Cytokine that has an axial patterning activity. Acts like bone morpho-genetic protein (BMP) antagonist in embryonic explants. Blocks the bmp2 activity. This is Neuroblastoma suppressor of tumorigenicity 1 (nbl1) from Xenopus tropicalis (Western clawed frog).